Reading from the N-terminus, the 246-residue chain is Orotidine 5'-phosphate decarboxylase (246 aa).

Residues aspartate 22, lysine 44, 71-80, threonine 130, arginine 191, glutamine 201, glycine 221, and arginine 222 each bind substrate; that span reads DLKYHDIPHT. Lysine 73 serves as the catalytic Proton donor.

The protein belongs to the OMP decarboxylase family. Type 1 subfamily. Homodimer.

It carries out the reaction orotidine 5'-phosphate + H(+) = UMP + CO2. Its pathway is pyrimidine metabolism; UMP biosynthesis via de novo pathway; UMP from orotate: step 2/2. Catalyzes the decarboxylation of orotidine 5'-monophosphate (OMP) to uridine 5'-monophosphate (UMP). This chain is Orotidine 5'-phosphate decarboxylase, found in Neisseria gonorrhoeae (strain ATCC 700825 / FA 1090).